The primary structure comprises 450 residues: Caspase Dronc (450 aa).

Positions 1–134 (MQPPELEIGM…RTSRKSADIV (134 aa)) are excised as a propeptide. Residues 64 to 109 (EKDVRVEQHRRLLLKITQRGPTAYNLLINALRNINCLDAAVLLESV) form the CARD domain. The segment at 114-125 (SRPPFISLNERR) is required for binding Diap1. Catalysis depends on residues H271 and C318. A propeptide spanning residues 321 to 324 (DEYD) is cleaved from the precursor.

It belongs to the peptidase C14A family. In terms of assembly, interacts (via residues 114-125) with Diap1 (via BIR 2 domain); binding blocks Dronc-mediated cell death. Can form a stable complex with Drice. Rpr, hid and grim can out-compete Dronc for binding Diap1, therefore removing Diap1-mediated ubiquitination. Interacts (via CARD domain) with Dark (via Dark CARD and WD domains); the interaction stimulates Dark oligomerization to form the apoptosome and brings pairs of Dronc molecules together on the apoptosome to facilitate their dimerization and activation by autocatalytic cleavage. Binding to Dark stimulates apoptosome assembly. After autocatalytic cleavage the Dronc caspase domain dissociates from the apoptosome but the CARD domain remains associated. Ubiquitinated by Diap1, leading to its subsequent degradation. Ubiquitously expressed in embryos during early stages of development. In late third instar larvae, dramatic up-regulation in salivary glands and midgut before histolysis of these tissues.

The protein resides in the cytoplasm. It catalyses the reaction Strict requirement for an Asp residue at position P1 and with a marked preference for His at position P2. It has a preferred cleavage sequence of Leu-Gly-His-Asp-|-Xaa.. Its activity is regulated as follows. Zymogen activated by autocatalytic cleavage; association with the Dark apoptosome brings multiple molecules together to facilitate their dimerization and activation by autocatalytic cleavage. Involved in the activation cascade of caspases responsible for apoptosis execution. Effector of steroid-mediated apoptosis during insect metamorphosis. Overexpression promotes programmed cell death. Interaction with Diap1 is required to suppress Dronc-mediated cell death; via Diap1-mediated ubiquitination of Dronc. Rate-limiting caspase in rpr, grim and hid death pathway. Recruited to the Dark apoptosome, an adapter protein complex that mediates activation of the caspase cascade in programmed cell death initiated by the intrinsic apoptosis pathway. Association with the Dark apoptosome stimulates autocatalytic cleavage and activation of Dronc, promoting Dronc-mediated cleavage of downstream effector caspases such as Drice. This chain is Caspase Dronc, found in Drosophila melanogaster (Fruit fly).